The chain runs to 412 residues: Double C2-like domain-containing protein beta (412 aa).

The tract at residues Met1–Tyr36 is negatively regulates targeting to plasma membrane. The tract at residues Met1–Tyr90 is mediates interaction with DYNLT1. The tract at residues Pro38–Asp123 is disordered. Residues Gly49–Arg70 show a composition bias toward low complexity. Residues Gly95–Lys108 are compositionally biased toward pro residues. The segment covering Asp112–Asp123 has biased composition (acidic residues). C2 domains are found at residues Ala126–Leu250 and Glu266–His399. Ca(2+) contacts are provided by Asp157, Asp163, Asp218, Asp220, Asp297, Asp303, Asp357, Asp359, and Asp365. The interval Asp257–His375 is mediates interaction with STXBP3. Position 411 is a phosphoserine (Ser411).

Interacts with the SNARE (soluble N-ethylmaleimide-sensitive factor attached protein receptor) complex composed of SNAP25, STX1A and VAMP2; the interaction is calcium-dependent and competitive with SYT1. Interacts with STX4; the interaction is calcium-dependent, increased by insulin and glucose, and mediates vesicle fusion with plasma membrane in pancreatic cells and adipocytes. Interacts with STXBP3; the interaction is direct, occurs at the cell membrane and regulates glucose-stimulated insulin secretion. May interact with UNC13A; the interaction mediates targeting to the plasma membrane. Interacts with cytoplasmic dynein light chain DYNLT1. Ca(2+) is required as a cofactor. Widely expressed with highest levels in brain and kidney. Expressed in pancreatic islet cells (at protein level).

The protein resides in the cytoplasm. It is found in the cytoplasmic granule. Its subcellular location is the cell membrane. Functionally, calcium sensor which positively regulates SNARE-dependent fusion of vesicles with membranes. Binds phospholipids in a calcium-dependent manner and may act at the priming stage of fusion by modifying membrane curvature to stimulate fusion. Involved in calcium-triggered exocytosis in chromaffin cells and calcium-dependent spontaneous release of neurotransmitter in absence of action potentials in neuronal cells. Involved both in glucose-stimulated insulin secretion in pancreatic cells and insulin-dependent GLUT4 transport to the plasma membrane in adipocytes. In Homo sapiens (Human), this protein is Double C2-like domain-containing protein beta.